The chain runs to 118 residues: Basic phospholipase A2 2 (118 aa).

Intrachain disulfides connect C11–C71, C27–C117, C29–C45, C44–C98, C51–C91, C60–C84, and C78–C89. Ca(2+) is bound by residues Y28, G30, and G32. H48 is an active-site residue. Residue D49 participates in Ca(2+) binding. D92 is a catalytic residue.

Belongs to the phospholipase A2 family. Group I subfamily. D49 sub-subfamily. Requires Ca(2+) as cofactor. Expressed by the venom gland.

Its subcellular location is the secreted. It catalyses the reaction a 1,2-diacyl-sn-glycero-3-phosphocholine + H2O = a 1-acyl-sn-glycero-3-phosphocholine + a fatty acid + H(+). Functionally, snake venom phospholipase A2 (PLA2) that inhibits neuromuscular transmission by blocking acetylcholine release from the nerve termini. PLA2 catalyzes the calcium-dependent hydrolysis of the 2-acyl groups in 3-sn-phosphoglycerides. The protein is Basic phospholipase A2 2 of Laticauda colubrina (Yellow-lipped sea krait).